Consider the following 275-residue polypeptide: 3-oxo-isoapionate decarboxylase (275 aa).

It carries out the reaction 3-oxoisoapionate + H(+) = L-erythrulose + CO2. Its pathway is carbohydrate metabolism. In terms of biological role, involved in catabolism of D-apiose. Catalyzes decarboxylation of 3-oxo-isoapionate to L-erythrulose. In Pectobacterium atrosepticum (strain SCRI 1043 / ATCC BAA-672) (Erwinia carotovora subsp. atroseptica), this protein is 3-oxo-isoapionate decarboxylase.